A 148-amino-acid chain; its full sequence is 3-dehydroquinate dehydratase (148 aa).

Y23 serves as the catalytic Proton acceptor. Residues N75, H81, and D88 each contribute to the substrate site. The Proton donor role is filled by H101. Substrate-binding positions include 102–103 (LS) and R112.

Belongs to the type-II 3-dehydroquinase family. As to quaternary structure, homododecamer.

The enzyme catalyses 3-dehydroquinate = 3-dehydroshikimate + H2O. It participates in metabolic intermediate biosynthesis; chorismate biosynthesis; chorismate from D-erythrose 4-phosphate and phosphoenolpyruvate: step 3/7. Catalyzes a trans-dehydration via an enolate intermediate. The polypeptide is 3-dehydroquinate dehydratase (Xanthomonas campestris pv. campestris (strain 8004)).